A 199-amino-acid chain; its full sequence is Inducible T-cell costimulator (199 aa).

The signal sequence occupies residues 1-20; sequence MKSGLWYFFLFCLRIKVLTG. Residues 21–140 are Extracellular-facing; the sequence is EINGSANYEM…YESQLCCQLK (120 aa). Positions 30–132 constitute an Ig-like V-type domain; that stretch reads MFIFHNGGVQ…LTGGYLHIYE (103 aa). Disulfide bonds link Cys-42-Cys-109 and Cys-63-Cys-83. Residues Asn-89 and Asn-110 are each glycosylated (N-linked (GlcNAc...) asparagine). Residues 141 to 161 traverse the membrane as a helical segment; sequence FWLPIGCAAFVVVCILGCILI. Residues 162 to 199 are Cytoplasmic-facing; sequence CWLTKKKYSSSVHDPNGEYMFMRAVNTAKKSRLTDVTL.

As to quaternary structure, homodimer; disulfide-linked. Interacts with ICOSLG. Interacts with PIK3R1. Interacts with TBK1; this interaction is critical for the maturation of T follicular regulatory cells. N-glycosylated. In terms of tissue distribution, activated T-cells. Highly expressed on tonsillar T-cells, which are closely associated with B-cells in the apical light zone of germinal centers, the site of terminal B-cell maturation. Expressed at lower levels in thymus, lung, lymph node and peripheral blood leukocytes. Expressed in the medulla of fetal and newborn thymus.

The protein resides in the cell membrane. The protein localises to the secreted. In terms of biological role, stimulatory receptor expressed in activated or antigen-experienced T-cells that plays an important role in the immune response. Upon binding to its ligand ICOSL expressed on antigen presenting cells (APCs), delivers costimulatory signals that enhances all basic T-cell responses to a foreign antigen, namely proliferation, secretion of lymphokines including IL10, up-regulation of molecules that mediate cell-cell interaction, and effective help for antibody secretion by B-cells. Also acts as a costimulatory receptor critical for the differentiation of T follicular regulatory cells upon immune challenges such as viral infection. Mechanistically, potentiates TCR-induced calcium flux by augmenting PLCG1 activation and actin remodeling. In addition, activates PI3K signaling pathways independently of calcium flux. Essential both for efficient interaction between T and B-cells and for normal antibody responses to T-cell dependent antigens. Prevents the apoptosis of pre-activated T-cells. Plays a critical role in CD40-mediated class switching of immunoglobin isotypes. This chain is Inducible T-cell costimulator (ICOS), found in Homo sapiens (Human).